A 160-amino-acid chain; its full sequence is Ureidoglycolate lyase (160 aa).

This sequence belongs to the ureidoglycolate lyase family. Homodimer. Ni(2+) serves as cofactor.

It catalyses the reaction (S)-ureidoglycolate = urea + glyoxylate. The protein operates within nitrogen metabolism; (S)-allantoin degradation. Catalyzes the catabolism of the allantoin degradation intermediate (S)-ureidoglycolate, generating urea and glyoxylate. Involved in the utilization of allantoin as nitrogen source. The polypeptide is Ureidoglycolate lyase (Salmonella enteritidis).